Reading from the N-terminus, the 214-residue chain is Ribonuclease P protein component 3 (214 aa).

It belongs to the eukaryotic/archaeal RNase P protein component 3 family. Consists of a catalytic RNA component and at least 4-5 protein subunits. Forms a subcomplex with Rnp2 which stimulates the catalytic RNA.

It localises to the cytoplasm. The enzyme catalyses Endonucleolytic cleavage of RNA, removing 5'-extranucleotides from tRNA precursor.. Functionally, part of ribonuclease P, a protein complex that generates mature tRNA molecules by cleaving their 5'-ends. The RNA is catalytic, but its KM for pre-tRNA is 170-fold decreased in the presence of the 4 known protein subunits (Rnp1-4). The protein subunits also decrease the amount of Mg(2+) needed for activity. The chain is Ribonuclease P protein component 3 from Pyrococcus furiosus (strain ATCC 43587 / DSM 3638 / JCM 8422 / Vc1).